A 204-amino-acid chain; its full sequence is Imidazole glycerol phosphate synthase subunit HisH (204 aa).

In terms of domain architecture, Glutamine amidotransferase type-1 spans 5–204 (KVVIIDTGCA…AKLIQNFLEL (200 aa)). Cys80 serves as the catalytic Nucleophile. Residues His186 and Glu188 contribute to the active site.

Heterodimer of HisH and HisF.

It localises to the cytoplasm. It carries out the reaction 5-[(5-phospho-1-deoxy-D-ribulos-1-ylimino)methylamino]-1-(5-phospho-beta-D-ribosyl)imidazole-4-carboxamide + L-glutamine = D-erythro-1-(imidazol-4-yl)glycerol 3-phosphate + 5-amino-1-(5-phospho-beta-D-ribosyl)imidazole-4-carboxamide + L-glutamate + H(+). The catalysed reaction is L-glutamine + H2O = L-glutamate + NH4(+). It participates in amino-acid biosynthesis; L-histidine biosynthesis; L-histidine from 5-phospho-alpha-D-ribose 1-diphosphate: step 5/9. Functionally, IGPS catalyzes the conversion of PRFAR and glutamine to IGP, AICAR and glutamate. The HisH subunit catalyzes the hydrolysis of glutamine to glutamate and ammonia as part of the synthesis of IGP and AICAR. The resulting ammonia molecule is channeled to the active site of HisF. The chain is Imidazole glycerol phosphate synthase subunit HisH from Vibrio parahaemolyticus serotype O3:K6 (strain RIMD 2210633).